We begin with the raw amino-acid sequence, 646 residues long: Phosphomethylpyrimidine synthase (646 aa).

Substrate-binding positions include N235, M264, Y293, H329, 349–351 (SRG), 390–393 (DGLR), and E429. H433 is a Zn(2+) binding site. Substrate is bound at residue Y456. H497 lines the Zn(2+) pocket. 3 residues coordinate [4Fe-4S] cluster: C577, C580, and C585. The tract at residues 624–646 (KSEEFRATGSELYHPAVHAEADE) is disordered.

It belongs to the ThiC family. Homodimer. [4Fe-4S] cluster is required as a cofactor.

It catalyses the reaction 5-amino-1-(5-phospho-beta-D-ribosyl)imidazole + S-adenosyl-L-methionine = 4-amino-2-methyl-5-(phosphooxymethyl)pyrimidine + CO + 5'-deoxyadenosine + formate + L-methionine + 3 H(+). It participates in cofactor biosynthesis; thiamine diphosphate biosynthesis. In terms of biological role, catalyzes the synthesis of the hydroxymethylpyrimidine phosphate (HMP-P) moiety of thiamine from aminoimidazole ribotide (AIR) in a radical S-adenosyl-L-methionine (SAM)-dependent reaction. The protein is Phosphomethylpyrimidine synthase of Vibrio parahaemolyticus serotype O3:K6 (strain RIMD 2210633).